We begin with the raw amino-acid sequence, 346 residues long: Putative [LysW]-L-2-aminoadipate/[LysW]-L-glutamate phosphate reductase (346 aa).

Residue S12–T15 coordinates NADP(+). The active site involves C147. An NADP(+)-binding site is contributed by N310.

Belongs to the NAGSA dehydrogenase family. Type 1 subfamily. LysY sub-subfamily.

The protein resides in the cytoplasm. The catalysed reaction is [amino-group carrier protein]-C-terminal-N-(1-carboxy-5-oxopentan-1-yl)-L-glutamine + phosphate + NADP(+) = [amino-group carrier protein]-C-terminal-N-(1-carboxy-5-phosphooxy-5-oxopentan-1-yl)-L-glutamine + NADPH + H(+). It catalyses the reaction [amino-group carrier protein]-C-terminal-gamma-(L-glutamyl-5-semialdehyde)-L-glutamate + phosphate + NADP(+) = [amino-group carrier protein]-C-terminal-gamma-(5-phospho-L-glutamyl)-L-glutamate + NADPH + H(+). The protein operates within amino-acid biosynthesis; L-lysine biosynthesis via AAA pathway; L-lysine from L-alpha-aminoadipate (Thermus route): step 3/5. It functions in the pathway amino-acid biosynthesis; L-arginine biosynthesis. In terms of biological role, involved in both the arginine and lysine biosynthetic pathways. This chain is Putative [LysW]-L-2-aminoadipate/[LysW]-L-glutamate phosphate reductase, found in Natronomonas pharaonis (strain ATCC 35678 / DSM 2160 / CIP 103997 / JCM 8858 / NBRC 14720 / NCIMB 2260 / Gabara) (Halobacterium pharaonis).